The primary structure comprises 563 residues: Rhotekin (563 aa).

The residue at position 14 (Arg14) is an Omega-N-methylarginine. Residues 17 to 98 (ALEMEFKRGR…LQRRKEAQVL (82 aa)) form the REM-1 domain. Phosphoserine occurs at positions 30 and 106. Residues 96-116 (QVLGKTSRRPSDSGPPAERSP) are disordered. Asymmetric dimethylarginine is present on Arg230. Ser232 is subject to Phosphoserine. The region spanning 309–416 (QPTASGTLRV…WMEALWQLFF (108 aa)) is the PH domain. A disordered region spans residues 518–563 (TFSLDAVPPDHSPRARSVAPLPPQRSPRTRGLCSKGQPRTWLQSPV). 3 positions are modified to phosphoserine: Ser520, Ser529, and Ser543.

Interacts via its C-terminal region with the TAX1BP3 PDZ domain. This interaction facilitates Rho-mediated activation of the c-Fos serum response element (SRE). Interacts with SEPT9. Specifically binds to GTP-bound RHOA, RHOB and RHOC and inhibits their GTPase activity. Highly expressed in prostate, moderately in kidney, heart, brain, spleen, testis, placenta, small intestine, pancreas, skeletal muscle and peripheral blood leukocytes, and weakly in ovary, colon and thymus. Weakly expressed in all normal cell lines tested. Overexpressed in various cancer cell lines.

Functionally, mediates Rho signaling to activate NF-kappa-B and may confer increased resistance to apoptosis to cells in gastric tumorigenesis. May play a novel role in the organization of septin structures. This chain is Rhotekin, found in Homo sapiens (Human).